We begin with the raw amino-acid sequence, 135 residues long: Beta-galactoside-binding lectin (135 aa).

Serine 2 carries the N-acetylserine modification. Cysteine 3 and cysteine 8 are disulfide-bonded. The Galectin domain maps to 5–135; sequence GPVCTNLGLK…DFTLRSVSWE (131 aa). Residues 46-50, histidine 54, asparagine 63, 70-73, and 70-76 each bind a beta-D-galactoside; these read HFNPR, WGTE, and WGTEQRE.

As to quaternary structure, homodimer; disulfide-linked. In terms of assembly, (Microbial infection) Interacts with newcastle disease virus protein HN; this interaction inhibits viral adsorption rather than internalization. Mainly in the intestine (adult), mainly in the skin (embryo).

This protein binds beta-galactoside. May participate in host antiviral defense through specific interaction with glycans on the viral envelope glycoproteins. In Gallus gallus (Chicken), this protein is Beta-galactoside-binding lectin (CG-1B).